The chain runs to 465 residues: Serine/threonine-protein kinase 38 (465 aa).

Ala-2 bears the N-acetylalanine mark. The interaction with S100B stretch occupies residues 62–87; that stretch reads KRLRRSAHARKETEFLRLKRTRLGLE. Position 74 is a phosphothreonine (Thr-74). Positions 89-382 constitute a Protein kinase domain; that stretch reads FESLKVIGRG…VEEIKNNSFF (294 aa). ATP-binding positions include 95 to 103 and Lys-118; that span reads IGRGAFGEV. Catalysis depends on Asp-212, which acts as the Proton acceptor. Position 264 is a phosphoserine (Ser-264). The residue at position 281 (Ser-281) is a Phosphoserine; by autocatalysis. A UFM1-interacting motif (UFIM) motif is present at residues 306–311; it reads WSLGVI. Positions 383–455 constitute an AGC-kinase C-terminal domain; sequence EGVDWEHIRE…KRFEGLTARG (73 aa). Thr-444 carries the phosphothreonine; by STK24/MST3 modification.

It belongs to the protein kinase superfamily. AGC Ser/Thr protein kinase family. In terms of assembly, homodimeric S100B binds two molecules of STK38. Interacts with MOB1 and MOB2. Interacts with MAP3K1 and MAP3K2 (via the kinase domain). Forms a tripartite complex with MOBKL1B and STK3/MST2. Interacts with MICAL1; leading to inhibit the protein kinase activity by antagonizing activation by MST1/STK4. Mg(2+) serves as cofactor. ISGylated. In terms of processing, phosphorylated by STK3/MST2 and this is enhanced by MOBKL1B.

It is found in the nucleus. Its subcellular location is the cytoplasm. It localises to the chromosome. The catalysed reaction is L-seryl-[protein] + ATP = O-phospho-L-seryl-[protein] + ADP + H(+). It carries out the reaction L-threonyl-[protein] + ATP = O-phospho-L-threonyl-[protein] + ADP + H(+). With respect to regulation, activated by binding of S100B which releases autoinhibitory N-lobe interactions, enabling ATP to bind and the autophosphorylation of Ser-281. Thr-444 then undergoes calcium-dependent phosphorylation by STK24/MST3. Interactions between phosphorylated Thr-444 and the N-lobe promote additional structural changes that complete the activation of the kinase. Autoinhibition is also released by the binding of MOB1/MOBKL1A and MOB2/HCCA2 to the N-terminal of STK38. Its function is as follows. Serine/threonine-protein kinase that acts as a negative regulator of MAP3K1/2 signaling. Converts MAP3K2 from its phosphorylated form to its non-phosphorylated form and inhibits autophosphorylation of MAP3K2. Acts as an ufmylation 'reader' in a kinase-independent manner: specifically recognizes and binds mono-ufmylated histone H4 in response to DNA damage, promoting the recruitment of SUV39H1 to the double-strand breaks, resulting in ATM activation. This Bos taurus (Bovine) protein is Serine/threonine-protein kinase 38 (STK38).